Consider the following 433-residue polypeptide: uncharacterized protein (433 aa).

Helical transmembrane passes span 28–48, 56–76, 102–122, 126–146, 164–184, 207–227, 250–270, 304–324, 345–365, 375–395, and 406–426; these read FAAL…SHII, IYGW…YPFF, IWIF…AVGL, AILT…FIVI, LSKL…IIAL, ALGF…ISAI, FNVG…LGAL, GLIA…VIDG, SYLN…IFYF, FAMI…LSLV, and LLWL…LFIA.

The protein localises to the cell membrane. This is an uncharacterized protein from Pasteurella multocida (strain Pm70).